The chain runs to 193 residues: Nucleoside triphosphate pyrophosphatase (193 aa).

The Proton acceptor role is filled by D69.

This sequence belongs to the Maf family. It depends on a divalent metal cation as a cofactor.

The protein localises to the cytoplasm. The catalysed reaction is a ribonucleoside 5'-triphosphate + H2O = a ribonucleoside 5'-phosphate + diphosphate + H(+). The enzyme catalyses a 2'-deoxyribonucleoside 5'-triphosphate + H2O = a 2'-deoxyribonucleoside 5'-phosphate + diphosphate + H(+). Nucleoside triphosphate pyrophosphatase. May have a dual role in cell division arrest and in preventing the incorporation of modified nucleotides into cellular nucleic acids. In Parasynechococcus marenigrum (strain WH8102), this protein is Nucleoside triphosphate pyrophosphatase.